The primary structure comprises 336 residues: Protein ABHD13 (336 aa).

A helical; Signal-anchor for type II membrane protein membrane pass occupies residues 37–57; sequence FNMYGGVILLLLIFVSIAGIL. Residues Ser-193, Asp-268, and His-298 each act as charge relay system in the active site. Residue Asn-299 is glycosylated (N-linked (GlcNAc...) asparagine).

The protein belongs to the serine esterase family.

The protein resides in the membrane. This is Protein ABHD13 from Xenopus laevis (African clawed frog).